The following is a 537-amino-acid chain: Phosphoenolpyruvate carboxykinase (ATP) (537 aa).

Substrate-binding residues include arginine 61, tyrosine 195, and lysine 201. Residues lysine 201, histidine 220, and 236–244 (GLSGTGKTT) each bind ATP. Positions 201 and 220 each coordinate Mn(2+). Mn(2+) is bound at residue aspartate 257. ATP is bound by residues glutamate 285, arginine 323, and threonine 448. Arginine 323 is a binding site for substrate.

The protein belongs to the phosphoenolpyruvate carboxykinase (ATP) family. Requires Mn(2+) as cofactor.

It localises to the cytoplasm. The catalysed reaction is oxaloacetate + ATP = phosphoenolpyruvate + ADP + CO2. It participates in carbohydrate biosynthesis; gluconeogenesis. Functionally, involved in the gluconeogenesis. Catalyzes the conversion of oxaloacetate (OAA) to phosphoenolpyruvate (PEP) through direct phosphoryl transfer between the nucleoside triphosphate and OAA. The sequence is that of Phosphoenolpyruvate carboxykinase (ATP) from Rhodopseudomonas palustris (strain BisA53).